We begin with the raw amino-acid sequence, 160 residues long: Ribosomal RNA large subunit methyltransferase H (160 aa).

The interval 44 to 63 is disordered; it reads LPESRASNSATRKREEAVQI. S-adenosyl-L-methionine is bound by residues Leu-76, Gly-108, and 127 to 132; that span reads LGKMTW.

It belongs to the RNA methyltransferase RlmH family. In terms of assembly, homodimer.

Its subcellular location is the cytoplasm. It carries out the reaction pseudouridine(1915) in 23S rRNA + S-adenosyl-L-methionine = N(3)-methylpseudouridine(1915) in 23S rRNA + S-adenosyl-L-homocysteine + H(+). Its function is as follows. Specifically methylates the pseudouridine at position 1915 (m3Psi1915) in 23S rRNA. In Allorhizobium ampelinum (strain ATCC BAA-846 / DSM 112012 / S4) (Agrobacterium vitis (strain S4)), this protein is Ribosomal RNA large subunit methyltransferase H.